The sequence spans 252 residues: Hydroxyacylglutathione hydrolase (252 aa).

Positions 54, 56, 58, 59, 111, 128, and 166 each coordinate Zn(2+).

The protein belongs to the metallo-beta-lactamase superfamily. Glyoxalase II family. In terms of assembly, monomer. Zn(2+) serves as cofactor.

It catalyses the reaction an S-(2-hydroxyacyl)glutathione + H2O = a 2-hydroxy carboxylate + glutathione + H(+). Its pathway is secondary metabolite metabolism; methylglyoxal degradation; (R)-lactate from methylglyoxal: step 2/2. In terms of biological role, thiolesterase that catalyzes the hydrolysis of S-D-lactoyl-glutathione to form glutathione and D-lactic acid. The protein is Hydroxyacylglutathione hydrolase of Vibrio vulnificus (strain CMCP6).